Here is a 325-residue protein sequence, read N- to C-terminus: Ferrochelatase (325 aa).

H172 and E267 together coordinate Fe cation.

This sequence belongs to the ferrochelatase family.

The protein localises to the cytoplasm. It carries out the reaction heme b + 2 H(+) = protoporphyrin IX + Fe(2+). It participates in porphyrin-containing compound metabolism; protoheme biosynthesis; protoheme from protoporphyrin-IX: step 1/1. In terms of biological role, catalyzes the ferrous insertion into protoporphyrin IX. This chain is Ferrochelatase, found in Acidobacterium capsulatum (strain ATCC 51196 / DSM 11244 / BCRC 80197 / JCM 7670 / NBRC 15755 / NCIMB 13165 / 161).